Consider the following 347-residue polypeptide: Holliday junction branch migration complex subunit RuvB (347 aa).

Residues Thr-4–Tyr-185 form a large ATPase domain (RuvB-L) region. Residues Leu-24, Arg-25, Gly-66, Lys-69, Thr-70, Thr-71, Glu-132–Tyr-134, Arg-175, Tyr-185, and Arg-222 contribute to the ATP site. A Mg(2+)-binding site is contributed by Thr-70. The small ATPAse domain (RuvB-S) stretch occupies residues Ser-186 to Asp-256. Residues Ala-259–Gln-347 are head domain (RuvB-H). Residues Arg-295, Arg-314, and Arg-319 each contribute to the DNA site.

It belongs to the RuvB family. As to quaternary structure, homohexamer. Forms an RuvA(8)-RuvB(12)-Holliday junction (HJ) complex. HJ DNA is sandwiched between 2 RuvA tetramers; dsDNA enters through RuvA and exits via RuvB. An RuvB hexamer assembles on each DNA strand where it exits the tetramer. Each RuvB hexamer is contacted by two RuvA subunits (via domain III) on 2 adjacent RuvB subunits; this complex drives branch migration. In the full resolvosome a probable DNA-RuvA(4)-RuvB(12)-RuvC(2) complex forms which resolves the HJ.

It localises to the cytoplasm. It carries out the reaction ATP + H2O = ADP + phosphate + H(+). In terms of biological role, the RuvA-RuvB-RuvC complex processes Holliday junction (HJ) DNA during genetic recombination and DNA repair, while the RuvA-RuvB complex plays an important role in the rescue of blocked DNA replication forks via replication fork reversal (RFR). RuvA specifically binds to HJ cruciform DNA, conferring on it an open structure. The RuvB hexamer acts as an ATP-dependent pump, pulling dsDNA into and through the RuvAB complex. RuvB forms 2 homohexamers on either side of HJ DNA bound by 1 or 2 RuvA tetramers; 4 subunits per hexamer contact DNA at a time. Coordinated motions by a converter formed by DNA-disengaged RuvB subunits stimulates ATP hydrolysis and nucleotide exchange. Immobilization of the converter enables RuvB to convert the ATP-contained energy into a lever motion, pulling 2 nucleotides of DNA out of the RuvA tetramer per ATP hydrolyzed, thus driving DNA branch migration. The RuvB motors rotate together with the DNA substrate, which together with the progressing nucleotide cycle form the mechanistic basis for DNA recombination by continuous HJ branch migration. Branch migration allows RuvC to scan DNA until it finds its consensus sequence, where it cleaves and resolves cruciform DNA. The protein is Holliday junction branch migration complex subunit RuvB of Nitrosospira multiformis (strain ATCC 25196 / NCIMB 11849 / C 71).